We begin with the raw amino-acid sequence, 274 residues long: Nitrogenase iron protein (274 aa).

ATP is bound at residue 8-15; sequence GKGGIGKS. Cys94 contributes to the [4Fe-4S] cluster binding site. Arg97 is subject to ADP-ribosylarginine; by dinitrogenase reductase ADP-ribosyltransferase. Cys131 serves as a coordination point for [4Fe-4S] cluster.

Belongs to the NifH/BchL/ChlL family. As to quaternary structure, homodimer. [4Fe-4S] cluster is required as a cofactor. In terms of processing, the reversible ADP-ribosylation of Arg-97 inactivates the nitrogenase reductase and regulates nitrogenase activity.

It carries out the reaction N2 + 8 reduced [2Fe-2S]-[ferredoxin] + 16 ATP + 16 H2O = H2 + 8 oxidized [2Fe-2S]-[ferredoxin] + 2 NH4(+) + 16 ADP + 16 phosphate + 6 H(+). The key enzymatic reactions in nitrogen fixation are catalyzed by the nitrogenase complex, which has 2 components: the iron protein and the molybdenum-iron protein. The polypeptide is Nitrogenase iron protein (Chlorobium chlorochromatii (strain CaD3)).